Reading from the N-terminus, the 570-residue chain is Repressible high-affinity phosphate permease (570 aa).

Topologically, residues 1–61 are cytoplasmic; sequence MSTPQKTAGG…AVAGVGFFTD (61 aa). A helical transmembrane segment spans residues 62–82; sequence SYDIFTVSLLTLMLGIVYFPG. The Extracellular portion of the chain corresponds to 83 to 95; sequence EGKMPTTSDTAIK. The helical transmembrane segment at 96–116 threads the bilayer; the sequence is LATSAGTVIGQVGFGAAADVF. Residues 117–120 are Cytoplasmic-facing; sequence GRKS. Residues 121–141 traverse the membrane as a helical segment; sequence MYGLELLFIIFATLAQALASG. The Extracellular portion of the chain corresponds to 142–143; it reads SP. The chain crosses the membrane as a helical span at residues 144–164; it reads SINIIGIIIFWRVLMGVGIGG. Residues 165 to 186 are Cytoplasmic-facing; that stretch reads DYPLSSIITSEFATTKWRGAMM. A helical transmembrane segment spans residues 187–207; sequence GAVFAMQGLGQLAAAFVMLFV. Topologically, residues 208–237 are extracellular; the sequence is TLGFKKSLEAAPTLASCTGDCAVAVDKMWR. Residues 238–258 traverse the membrane as a helical segment; that stretch reads TVIGVGAVPGCIALYYRLTIP. Over 259–325 the chain is Cytoplasmic; it reads ETPRYTFDVK…FFRHYSKRKN (67 aa). The helical transmembrane segment at 326-346 threads the bilayer; the sequence is AMLLAGTALSWCFLDIAYYGV. Residues 347–374 are Extracellular-facing; sequence SLNNATILNVIGYSTTGAKNTYEILYNT. The helical transmembrane segment at 375 to 395 threads the bilayer; that stretch reads AVGNLIIVLAGAVPGYWVTVF. Residues 396–403 are Cytoplasmic-facing; the sequence is TVDTVGRK. A helical transmembrane segment spans residues 404–424; that stretch reads PIQFMGFGILTILFVVMGFAY. The Extracellular segment spans residues 425-433; that stretch reads KHLSPHALL. Residues 434–454 traverse the membrane as a helical segment; the sequence is AIFVLAQFFFNFGPNATTFIV. Residues 455–468 are Cytoplasmic-facing; that stretch reads PGEVFPTRYRSTSH. A helical membrane pass occupies residues 469 to 489; sequence GLSAAMGKIGSIIGQGAIAPL. Over 490-505 the chain is Extracellular; it reads RTRGAVKGGNPNPWMN. Residues 506–526 form a helical membrane-spanning segment; the sequence is HVLEIYALFMLLGVGTTFLIP. The Cytoplasmic segment spans residues 527–570; that stretch reads ETKRKTLEELSGEFDMSGEEEAQRDTTLTEHKTEAPTSSAAVNA. The span at 537-546 shows a compositional bias: acidic residues; it reads SGEFDMSGEE. Residues 537–570 form a disordered region; the sequence is SGEFDMSGEEEAQRDTTLTEHKTEAPTSSAAVNA. Basic and acidic residues predominate over residues 547–560; sequence EAQRDTTLTEHKTE. Residues 561–570 are compositionally biased toward polar residues; the sequence is APTSSAAVNA.

This sequence belongs to the major facilitator superfamily. Sugar transporter (TC 2.A.1.1) family.

It is found in the cell membrane. Its activity is regulated as follows. Phosphate transport activity is competitively inhibited by arsenate. Its function is as follows. High-affinity transporter for external inorganic phosphate. Acts probably as a H(+)-phosphate symporter. The polypeptide is Repressible high-affinity phosphate permease (Neurospora crassa (strain ATCC 24698 / 74-OR23-1A / CBS 708.71 / DSM 1257 / FGSC 987)).